Consider the following 279-residue polypeptide: 3-methyl-2-oxobutanoate hydroxymethyltransferase (279 aa).

2 residues coordinate Mg(2+): aspartate 43 and aspartate 82. Residues 43-44 (DS), aspartate 82, and lysine 112 contribute to the 3-methyl-2-oxobutanoate site. Glutamate 114 serves as a coordination point for Mg(2+). Residue glutamate 181 is the Proton acceptor of the active site.

The protein belongs to the PanB family. In terms of assembly, homodecamer; pentamer of dimers. Mg(2+) serves as cofactor.

It is found in the cytoplasm. The enzyme catalyses 3-methyl-2-oxobutanoate + (6R)-5,10-methylene-5,6,7,8-tetrahydrofolate + H2O = 2-dehydropantoate + (6S)-5,6,7,8-tetrahydrofolate. It functions in the pathway cofactor biosynthesis; (R)-pantothenate biosynthesis; (R)-pantoate from 3-methyl-2-oxobutanoate: step 1/2. Its function is as follows. Catalyzes the reversible reaction in which hydroxymethyl group from 5,10-methylenetetrahydrofolate is transferred onto alpha-ketoisovalerate to form ketopantoate. In Bacillus anthracis (strain A0248), this protein is 3-methyl-2-oxobutanoate hydroxymethyltransferase.